The chain runs to 349 residues: MTLEATIVCLDNSEWMRNGDFTPSRSEAQKDAVNLICASKTQSNPESAVSIMSMAGKKPEVLVTLTQELSKILSGAQELKINGKIDFSTTMQIAQLALRHRQNNHQHPRIIAFVGSPLKETKEELIQLAKRLKKNGVAVDIINFGEVTENSDKLEAFINDVNNNDESHLLTVPPGPHILSDIILQSPIVESGSGQFGSEFINADTDPDLAMALKLSLEEEKQRQERERKAREEANGGSTNSGTTTTTAPTESNMDVNFEDDPELAEALALSMATDKMEVQSSTTNTDSQPPQQQQQPPTDDTSSEAFKDQDFLNSTLNSLPGVDPNRIKNALENLSKKDEDKDKDNEKK.

Positions 5–188 constitute a VWFA domain; the sequence is ATIVCLDNSE…LSDIILQSPI (184 aa). Positions 204-223 constitute a UIM 1 domain; sequence DTDPDLAMALKLSLEEEKQR. Residues 219-234 are compositionally biased toward basic and acidic residues; it reads EEKQRQERERKAREEA. Disordered regions lie at residues 219–257 and 274–349; these read EEKQ…MDVN and TDKM…NEKK. The span at 235-253 shows a compositional bias: low complexity; sequence NGGSTNSGTTTTTAPTESN. Residues 259–278 enclose the UIM 2 domain; the sequence is EDDPELAEALALSMATDKME. Positions 280–301 are enriched in low complexity; it reads QSSTTNTDSQPPQQQQQPPTDD. A compositionally biased stretch (basic and acidic residues) spans 335–349; sequence LSKKDEDKDKDNEKK.

It belongs to the proteasome subunit S5A family. In terms of assembly, the 26S proteasome is composed of a core protease, known as the 20S proteasome, capped at one or both ends by the 19S regulatory complex (RC). The RC is composed of at least 18 different subunits in two subcomplexes, the base and the lid, which form the portions proximal and distal to the 20S proteolytic core, respectively.

Its function is as follows. Binds and presumably selects ubiquitin-conjugates for destruction. This is 26S proteasome non-ATPase regulatory subunit 4 (psmD4) from Dictyostelium discoideum (Social amoeba).